Here is a 510-residue protein sequence, read N- to C-terminus: Light-independent protochlorophyllide reductase subunit B (510 aa).

Position 36 (D36) interacts with [4Fe-4S] cluster. D297 serves as the catalytic Proton donor. 432–433 serves as a coordination point for substrate; that stretch reads GM.

It belongs to the ChlB/BchB/BchZ family. In terms of assembly, protochlorophyllide reductase is composed of three subunits; ChlL, ChlN and ChlB. Forms a heterotetramer of two ChlB and two ChlN subunits. The cofactor is [4Fe-4S] cluster.

It localises to the plastid. Its subcellular location is the chloroplast. It carries out the reaction chlorophyllide a + oxidized 2[4Fe-4S]-[ferredoxin] + 2 ADP + 2 phosphate = protochlorophyllide a + reduced 2[4Fe-4S]-[ferredoxin] + 2 ATP + 2 H2O. It functions in the pathway porphyrin-containing compound metabolism; chlorophyll biosynthesis (light-independent). In terms of biological role, component of the dark-operative protochlorophyllide reductase (DPOR) that uses Mg-ATP and reduced ferredoxin to reduce ring D of protochlorophyllide (Pchlide) to form chlorophyllide a (Chlide). This reaction is light-independent. The NB-protein (ChlN-ChlB) is the catalytic component of the complex. The protein is Light-independent protochlorophyllide reductase subunit B of Pinus thunbergii (Japanese black pine).